Reading from the N-terminus, the 340-residue chain is Ava biosynthesis cluster protein G (340 aa).

4 helical membrane-spanning segments follow: residues 15-35, 81-101, 118-138, and 148-168; these read WSAFWLWAIIGGYFAAFNIWN, FMISTDFITSACSVIALLQFV, AFFVMMGFGAPSGIMVAVHAF, and LSIMLTGVLTICFLATSFLCI. An N-linked (GlcNAc...) asparagine glycan is attached at N171. The next 2 membrane-spanning stretches (helical) occupy residues 219–239 and 315–335; these read FSSVYLIIPEVMNWTLGYVAF and SALTAVCLLLRYVGLILWLQI.

The protein localises to the membrane. The protein operates within secondary metabolite biosynthesis. Functionally, part of the cluster that mediates the biosynthesis of a highly modified cyclo-arginine-tryptophan dipeptide (cRW). The first step of the pathway is perfornmed by the arginine-containing cyclodipeptide synthase (RCPDS) avaA that acts as the scaffold-generating enzyme and is responsible for formation of the cyclo-Arg-Trp (cRW) diketopiperazine. AvaB then acts as a multifunctional flavoenzyme that is responsible for generating the cyclo-Arg-formylkynurenine DKP, which can be deformylated by avaC. AvaB then further catalyzes an additional N-oxidation followed by cyclization and dehydration. The next step is an N-acetylation of the guanidine group catalyzed by the arginine N-acetyltransferase avaD. The roles of the additional enzymes identified within the ava cluster still have to be determined. This Aspergillus versicolor protein is Ava biosynthesis cluster protein G.